The following is a 358-amino-acid chain: Peptide chain release factor 1 (358 aa).

N5-methylglutamine is present on Q233.

The protein belongs to the prokaryotic/mitochondrial release factor family. Methylated by PrmC. Methylation increases the termination efficiency of RF1.

The protein localises to the cytoplasm. Functionally, peptide chain release factor 1 directs the termination of translation in response to the peptide chain termination codons UAG and UAA. This is Peptide chain release factor 1 from Staphylococcus aureus (strain MRSA252).